Consider the following 200-residue polypeptide: Flavin prenyltransferase UbiX (200 aa).

FMN contacts are provided by residues 15-17, Thr41, 102-105, and Arg137; these read GAS and SMGT. Positions 167 and 183 each coordinate dimethylallyl phosphate.

Belongs to the UbiX/PAD1 family.

It carries out the reaction dimethylallyl phosphate + FMNH2 = prenylated FMNH2 + phosphate. Functionally, flavin prenyltransferase that catalyzes the synthesis of the prenylated FMN cofactor (prenyl-FMN) for 4-hydroxy-3-polyprenylbenzoic acid decarboxylase UbiD. The prenyltransferase is metal-independent and links a dimethylallyl moiety from dimethylallyl monophosphate (DMAP) to the flavin N5 and C6 atoms of FMN. The polypeptide is Flavin prenyltransferase UbiX (Alkalihalophilus pseudofirmus (strain ATCC BAA-2126 / JCM 17055 / OF4) (Bacillus pseudofirmus)).